A 539-amino-acid chain; its full sequence is Protein mushroom body miniature (539 aa).

A compositionally biased stretch (polar residues) spans 1–11 (MHNSGGQSGWN). A disordered region spans residues 1–345 (MHNSGGQSGW…EDDKKARKQK (345 aa)). Basic and acidic residues predominate over residues 67–79 (KFRDPQQELDNHQ). Positions 80–89 (PNKRGGRRNR) are enriched in basic residues. Gly residues predominate over residues 90–101 (GGGGGGGGWGGR). A compositionally biased stretch (basic and acidic residues) spans 199–208 (IKKEKEMEHK). Positions 268 to 289 (VASTPKPKAVKPVSSSDSSTSD) are enriched in low complexity. Serine 288 and serine 290 each carry phosphoserine. Residues threonine 292 and threonine 327 each carry the phosphothreonine modification. Positions 327–336 (TDEEESTEPE) are enriched in acidic residues. Phosphoserine is present on serine 332. Phosphothreonine is present on threonine 333. 2 consecutive CCHC-type zinc fingers follow at residues 354-367 (CGIC…SFQC) and 371-386 (CRNC…NCPN). The segment at 421–513 (VTAPVSAKPK…AASLPPQVFP (93 aa)) is disordered. The segment covering 428–447 (KPKKDKKASIKKIKKSSQKR) has biased composition (basic residues). Acidic residues predominate over residues 456–480 (DEEDDEEDDDEDEDDSSESDDSESS).

May be phosphorylated in vivo by CkIIalpha. mbm and CkIIalpha colocalize to the nucleolus and mbm is phosphorylated in vitro by CkIIalpha. As to expression, shows widespread expression in third instar larval brain with no apparent difference between males and females (at protein level). Detected at low levels in the mushroom body neuropil and is also expressed in many cells of the brain outside the mushroom body (at protein level). Not detected in third instar larval brain cells in anaphase (at protein level).

It is found in the nucleus. The protein localises to the nucleolus. It localises to the cytoplasm. Functionally, required for small ribosomal subunit biogenesis in neuroblasts. Plays a role in mushroom body development. This chain is Protein mushroom body miniature, found in Drosophila melanogaster (Fruit fly).